The chain runs to 1423 residues: DNA-directed RNA polymerase, mitochondrial (1423 aa).

The transit peptide at 1 to 73 (MLPRTASATR…RATVGFERHL (73 aa)) directs the protein to the mitochondrion. A disordered region spans residues 266–303 (NMPDNVDPDTFAQQQQQQQQQQQQQQEQQQQQDTSIDQ). Residues 278–297 (QQQQQQQQQQQQQQEQQQQQ) are compositionally biased toward low complexity. Catalysis depends on residues Asp-901 and Lys-970. Over residues 1055–1064 (EFERSERSPH) the composition is skewed to basic and acidic residues. The segment at 1055–1087 (EFERSERSPHGDGTASGENITLAGNPRKSSAHK) is disordered. The active site involves Asp-1180. The segment at 1316–1342 (VRRGREMDEEGEVDGSEEAVEHEDGMH) is disordered. Residues 1322-1336 (MDEEGEVDGSEEAVE) are compositionally biased toward acidic residues.

The protein belongs to the phage and mitochondrial RNA polymerase family.

It localises to the mitochondrion. It catalyses the reaction RNA(n) + a ribonucleoside 5'-triphosphate = RNA(n+1) + diphosphate. DNA-dependent RNA polymerase catalyzes the transcription of DNA into RNA using the four ribonucleoside triphosphates as substrates. The chain is DNA-directed RNA polymerase, mitochondrial (cyt-5) from Neurospora crassa (strain ATCC 24698 / 74-OR23-1A / CBS 708.71 / DSM 1257 / FGSC 987).